A 685-amino-acid chain; its full sequence is Bifunctional lycopene cyclase/phytoene synthase (685 aa).

A lycopene beta-cyclase region spans residues 15-255 (TLSYRHFHLL…LVSACFTFDR (241 aa)). The next 7 helical transmembrane spans lie at 21–41 (FHLL…RPFL), 48–68 (KLIL…NLIV), 92–114 (YFFF…RWAL), 129–149 (LATP…KAAV), 156–176 (YFGM…WGSV), 187–207 (GLAP…ASDV), and 231–251 (LPIE…SACF). The phytoene synthase stretch occupies residues 262 to 685 (QSVAENAPPL…RAVSAVYFGV (424 aa)).

It in the N-terminal section; belongs to the lycopene beta-cyclase family. In the C-terminal section; belongs to the phytoene/squalene synthase family.

The protein localises to the membrane. It carries out the reaction all-trans-lycopene = gamma-carotene. The catalysed reaction is gamma-carotene = all-trans-beta-carotene. The enzyme catalyses 2 (2E,6E,10E)-geranylgeranyl diphosphate = 15-cis-phytoene + 2 diphosphate. It participates in carotenoid biosynthesis; beta-carotene biosynthesis. It functions in the pathway carotenoid biosynthesis; phytoene biosynthesis; all-trans-phytoene from geranylgeranyl diphosphate: step 1/1. Its function is as follows. Bifunctional enzyme that catalyzes the reactions from geranylgeranyl diphosphate to phytoene (phytoene synthase) and lycopene to beta-carotene via the intermediate gamma-carotene (lycopene cyclase). The sequence is that of Bifunctional lycopene cyclase/phytoene synthase from Sporisorium reilianum (strain SRZ2) (Maize head smut fungus).